A 235-amino-acid chain; its full sequence is Large ribosomal subunit protein uL1 (235 aa).

This sequence belongs to the universal ribosomal protein uL1 family. Part of the 50S ribosomal subunit.

Its function is as follows. Binds directly to 23S rRNA. The L1 stalk is quite mobile in the ribosome, and is involved in E site tRNA release. Protein L1 is also a translational repressor protein, it controls the translation of the L11 operon by binding to its mRNA. This is Large ribosomal subunit protein uL1 from Methylibium petroleiphilum (strain ATCC BAA-1232 / LMG 22953 / PM1).